Reading from the N-terminus, the 113-residue chain is Ribulose bisphosphate carboxylase small subunit (113 aa).

It belongs to the RuBisCO small chain family. Heterohexadecamer of 8 large and 8 small subunits. RuBisCO interacts with the C-terminus of CcmM, and can be found in complexes that also include carbonic anhydrase (ccaA).

Its subcellular location is the carboxysome. Functionally, ruBisCO catalyzes two reactions: the carboxylation of D-ribulose 1,5-bisphosphate, the primary event in carbon dioxide fixation, as well as the oxidative fragmentation of the pentose substrate in the photorespiration process. Both reactions occur simultaneously and in competition at the same active site. Although the small subunit is not catalytic it is essential for maximal activity. In Synechocystis sp. (strain ATCC 27184 / PCC 6803 / Kazusa), this protein is Ribulose bisphosphate carboxylase small subunit.